The primary structure comprises 179 residues: Large ribosomal subunit protein uL6 (179 aa).

This sequence belongs to the universal ribosomal protein uL6 family. In terms of assembly, part of the 50S ribosomal subunit.

In terms of biological role, this protein binds to the 23S rRNA, and is important in its secondary structure. It is located near the subunit interface in the base of the L7/L12 stalk, and near the tRNA binding site of the peptidyltransferase center. The sequence is that of Large ribosomal subunit protein uL6 from Solidesulfovibrio magneticus (strain ATCC 700980 / DSM 13731 / RS-1) (Desulfovibrio magneticus).